We begin with the raw amino-acid sequence, 260 residues long: tRNA (guanine-N(1)-)-methyltransferase (260 aa).

Residues Gly117 and 137–142 each bind S-adenosyl-L-methionine; that span reads LGDFVL.

It belongs to the RNA methyltransferase TrmD family. As to quaternary structure, homodimer.

It localises to the cytoplasm. The enzyme catalyses guanosine(37) in tRNA + S-adenosyl-L-methionine = N(1)-methylguanosine(37) in tRNA + S-adenosyl-L-homocysteine + H(+). In terms of biological role, specifically methylates guanosine-37 in various tRNAs. The chain is tRNA (guanine-N(1)-)-methyltransferase from Cupriavidus taiwanensis (strain DSM 17343 / BCRC 17206 / CCUG 44338 / CIP 107171 / LMG 19424 / R1) (Ralstonia taiwanensis (strain LMG 19424)).